The primary structure comprises 261 residues: MGSIAGFSSAVLSKLGIPVPYAPRLLAGGWVVAGWAGLAYGVYLTVIALRLPPGSELTGHAMLQPAFKASMAVLLAAAAVAHPIGRERRWLVPALLLSATGDWLLAIPWWTWAFVFGLGAFLLAHLCFIGALLPLARQAAPSRGRVAAVVAMCVASAGLLVWFWPHLGKDNLTIPVTVYIVALSAMVCTALLARLPTIWTAVGAVCFAASDSMIGIGRFILGNEALAVPIWWSYAAAEILITAGFFFGREVPDNAAAPTDS.

The next 8 helical transmembrane spans lie at 29-49 (GWVV…VIAL), 65-85 (PAFK…HPIG), 90-107 (WLVP…LLAI), 111-133 (TWAF…GALL), 146-166 (VAAV…FWPH), 172-192 (LTIP…TALL), 197-217 (TIWT…IGIG), and 227-247 (AVPI…GFFF).

Belongs to the TMEM86 family.

Its subcellular location is the cell membrane. The catalysed reaction is a 1-O-(1Z-alkenyl)-sn-glycero-3-phosphocholine + H2O = a 2,3-saturated aldehyde + sn-glycerol 3-phosphocholine. The enzyme catalyses a 1-O-(1Z-alkenyl)-sn-glycero-3-phosphoethanolamine + H2O = a 2,3-saturated aldehyde + sn-glycero-3-phosphoethanolamine. Functionally, specifically hydrolyzes the vinyl ether bond of lysoplasmenylcholine (pLPC) and lysoplasmenylethanolamine (pLPE) to release a fatty aldehyde and glycerophospho-choline or glycerophospho-ethanolamine. This is Lysoplasmalogenase from Mycobacterium bovis (strain ATCC BAA-935 / AF2122/97).